Here is a 513-residue protein sequence, read N- to C-terminus: GMP synthase [glutamine-hydrolyzing] (513 aa).

The Glutamine amidotransferase type-1 domain occupies 8-198 (KIIVLDYGSQ…ALNICGAKGN (191 aa)). C85 acts as the Nucleophile in catalysis. Active-site residues include H172 and E174. A GMPS ATP-PPase domain is found at 199–388 (WSMENFIDMQ…LGMPDEIVWR (190 aa)). Position 226–232 (226–232 (SGGVDSS)) interacts with ATP.

Homodimer.

It catalyses the reaction XMP + L-glutamine + ATP + H2O = GMP + L-glutamate + AMP + diphosphate + 2 H(+). Its pathway is purine metabolism; GMP biosynthesis; GMP from XMP (L-Gln route): step 1/1. Catalyzes the synthesis of GMP from XMP. This Lactococcus lactis subsp. cremoris (strain MG1363) protein is GMP synthase [glutamine-hydrolyzing] (guaA).